A 145-amino-acid chain; its full sequence is uncharacterized protein (145 aa).

This is an uncharacterized protein from Rhizobium radiobacter (Agrobacterium tumefaciens).